Reading from the N-terminus, the 334-residue chain is B1 bradykinin receptor (334 aa).

The segment at 1 to 21 (MASQASLKLQPSNQSQQAPPN) is disordered. Residues 1-41 (MASQASLKLQPSNQSQQAPPNITSCEGAPEAWDLLCRVLPG) lie on the Extracellular side of the membrane. The segment covering 10 to 21 (QPSNQSQQAPPN) has biased composition (low complexity). Residues Asn-13 and Asn-21 are each glycosylated (N-linked (GlcNAc...) asparagine). Residues 42 to 62 (FVITVCFFGLLGNLLVLSFFL) form a helical membrane-spanning segment. The Cytoplasmic portion of the chain corresponds to 63 to 80 (LPWRRWWQQRRQRLTIAE). The helical transmembrane segment at 81-101 (IYLANLAASDLVFVLGLPFWA) threads the bilayer. Topologically, residues 102 to 118 (ENVGNRFNWPFGSDLCR) are extracellular. Cysteines 117 and 196 form a disulfide. The chain crosses the membrane as a helical span at residues 119–139 (VVSGVIKANLFISIFLVVAIS). The Cytoplasmic portion of the chain corresponds to 140 to 161 (QDRYRLLVYPMTSWGNRRRRQA). The helical transmembrane segment at 162–182 (QVTCLLIWVAGGLLSTPTFLL) threads the bilayer. Over 183 to 214 (RSVKVVPDLNISACILLFPHEAWHFVRMVELN) the chain is Extracellular. Residue Asn-192 is glycosylated (N-linked (GlcNAc...) asparagine). A helical transmembrane segment spans residues 215 to 235 (VLGFLLPLAAILYFNFHILAS). Topologically, residues 236–258 (LRGQKEASRTRCGGPKDSKTMGL) are cytoplasmic. Residues 259–279 (ILTLVASFLVCWAPYHFFAFL) traverse the membrane as a helical segment. The Extracellular segment spans residues 280-302 (DFLVQVRVIQDCFWKELTDLGLQ). The helical transmembrane segment at 303–323 (LANFFAFVNSCLNPLIYVFAG) threads the bilayer. At 324–334 (RLFKTRVLGTL) the chain is on the cytoplasmic side.

This sequence belongs to the G-protein coupled receptor 1 family. Bradykinin receptor subfamily. BDKRB1 sub-subfamily. In terms of tissue distribution, expressed in heart, liver and lung.

The protein resides in the cell membrane. Functionally, this is a receptor for bradykinin. Could be a factor in chronic pain and inflammation. This is B1 bradykinin receptor (Bdkrb1) from Mus musculus (Mouse).